We begin with the raw amino-acid sequence, 461 residues long: Cysteine--tRNA ligase (461 aa).

Cysteine 28 lines the Zn(2+) pocket. The short motif at valine 30 to histidine 40 is the 'HIGH' region element. Zn(2+)-binding residues include cysteine 209, histidine 234, and glutamate 238. Residues lysine 266–serine 270 carry the 'KMSKS' region motif. Lysine 269 serves as a coordination point for ATP.

This sequence belongs to the class-I aminoacyl-tRNA synthetase family. Monomer. Requires Zn(2+) as cofactor.

It is found in the cytoplasm. The enzyme catalyses tRNA(Cys) + L-cysteine + ATP = L-cysteinyl-tRNA(Cys) + AMP + diphosphate. The protein is Cysteine--tRNA ligase of Serratia proteamaculans (strain 568).